The sequence spans 380 residues: Cytochrome b (380 aa).

A run of 4 helical transmembrane segments spans residues 34-54 (FGSL…LLAT), 78-99 (WLIR…YLHI), 114-134 (WNTG…GYVL), and 179-199 (FFAL…IHLT). Heme b contacts are provided by histidine 84 and histidine 98. Residues histidine 183 and histidine 197 each coordinate heme b. Position 202 (histidine 202) interacts with a ubiquinone. The next 4 helical transmembrane spans lie at 227 to 247 (LKDT…ALFS), 289 to 309 (LGGV…PLLH), 321 to 341 (FSQF…WVGS), and 348 to 368 (FIII…ILLP).

Belongs to the cytochrome b family. As to quaternary structure, the cytochrome bc1 complex contains 11 subunits: 3 respiratory subunits (MT-CYB, CYC1 and UQCRFS1), 2 core proteins (UQCRC1 and UQCRC2) and 6 low-molecular weight proteins (UQCRH/QCR6, UQCRB/QCR7, UQCRQ/QCR8, UQCR10/QCR9, UQCR11/QCR10 and a cleavage product of UQCRFS1). This cytochrome bc1 complex then forms a dimer. It depends on heme b as a cofactor.

It is found in the mitochondrion inner membrane. Its function is as follows. Component of the ubiquinol-cytochrome c reductase complex (complex III or cytochrome b-c1 complex) that is part of the mitochondrial respiratory chain. The b-c1 complex mediates electron transfer from ubiquinol to cytochrome c. Contributes to the generation of a proton gradient across the mitochondrial membrane that is then used for ATP synthesis. The polypeptide is Cytochrome b (MT-CYB) (Garrodia nereis (Grey-backed storm-petrel)).